We begin with the raw amino-acid sequence, 248 residues long: Proteasome subunit alpha (248 aa).

The protein belongs to the peptidase T1A family. In terms of assembly, the 20S proteasome core is composed of 14 alpha and 14 beta subunits that assemble into four stacked heptameric rings, resulting in a barrel-shaped structure. The two inner rings, each composed of seven catalytic beta subunits, are sandwiched by two outer rings, each composed of seven alpha subunits. The catalytic chamber with the active sites is on the inside of the barrel. Has a gated structure, the ends of the cylinder being occluded by the N-termini of the alpha-subunits. Is capped by the proteasome-associated ATPase, ARC.

It localises to the cytoplasm. The protein operates within protein degradation; proteasomal Pup-dependent pathway. Its activity is regulated as follows. The formation of the proteasomal ATPase ARC-20S proteasome complex, likely via the docking of the C-termini of ARC into the intersubunit pockets in the alpha-rings, may trigger opening of the gate for substrate entry. Interconversion between the open-gate and close-gate conformations leads to a dynamic regulation of the 20S proteasome proteolysis activity. In terms of biological role, component of the proteasome core, a large protease complex with broad specificity involved in protein degradation. This is Proteasome subunit alpha from Mycobacterium tuberculosis (strain ATCC 25177 / H37Ra).